The following is a 445-amino-acid chain: Argininosuccinate lyase (445 aa).

This sequence belongs to the lyase 1 family. Argininosuccinate lyase subfamily.

The protein resides in the cytoplasm. It catalyses the reaction 2-(N(omega)-L-arginino)succinate = fumarate + L-arginine. Its pathway is amino-acid biosynthesis; L-arginine biosynthesis; L-arginine from L-ornithine and carbamoyl phosphate: step 3/3. The sequence is that of Argininosuccinate lyase from Xylella fastidiosa (strain Temecula1 / ATCC 700964).